A 280-amino-acid polypeptide reads, in one-letter code: 2-dehydro-3-deoxyphosphooctonate aldolase (280 aa).

Belongs to the KdsA family.

It localises to the cytoplasm. The enzyme catalyses D-arabinose 5-phosphate + phosphoenolpyruvate + H2O = 3-deoxy-alpha-D-manno-2-octulosonate-8-phosphate + phosphate. It functions in the pathway carbohydrate biosynthesis; 3-deoxy-D-manno-octulosonate biosynthesis; 3-deoxy-D-manno-octulosonate from D-ribulose 5-phosphate: step 2/3. It participates in bacterial outer membrane biogenesis; lipopolysaccharide biosynthesis. The polypeptide is 2-dehydro-3-deoxyphosphooctonate aldolase (Neisseria meningitidis serogroup C / serotype 2a (strain ATCC 700532 / DSM 15464 / FAM18)).